Consider the following 587-residue polypeptide: Nucleoporin p58/p45 (587 aa).

5 consecutive repeat copies span residues 7–8, 30–31, 44–45, 63–64, and 68–69. The interval 7 to 567 is 14 X 2 AA repeats of F-G; it reads FGSGTLGSTT…VSNPASAGFG (561 aa). The interval 196-236 is disordered; it reads TSAASNEGLGGIDFSTSSDKKSDKTGTRPEDSKALKDENLP. The span at 213–234 shows a compositional bias: basic and acidic residues; that stretch reads SDKKSDKTGTRPEDSKALKDEN. Coiled-coil stretches lie at residues 244–264 and 302–369; these read ENLQKFVKEQKQVQEEISRMS and ETAQ…SHIT. Residue T319 is modified to Phosphothreonine. Repeat copies occupy residues 476–477, 480–481, 501–502, 507–508, 517–518, 519–520, 533–534, 556–557, and 566–567. Positions 565–587 are disordered; sequence GFGTGGQLLQLKRPPAGNKRGKR.

Belongs to the NUP58 family. As to quaternary structure, component of the p62 complex, a complex at least composed of NUP62, NUP54, and NUP58. Interacts with NUTF2. Interacts with SRP1-alpha and Importin p97 proteins when they are together, but not with SRP1-alpha protein alone. O-glycosylated.

The protein resides in the nucleus. Its subcellular location is the nuclear pore complex. It localises to the nucleus membrane. Its function is as follows. Component of the nuclear pore complex, a complex required for the trafficking across the nuclear membrane. The chain is Nucleoporin p58/p45 from Mus musculus (Mouse).